The chain runs to 557 residues: Urocanate hydratase (557 aa).

The disordered stretch occupies residues 1–20; it reads MSNPRHNEREVRSPRGDELN. Residues 52 to 53, Q130, 176 to 178, E196, R201, 242 to 243, 263 to 267, 273 to 274, and Y322 each bind NAD(+); these read GG, GMG, NA, QTSAH, and YL. The active site involves C410. G492 lines the NAD(+) pocket.

It belongs to the urocanase family. It depends on NAD(+) as a cofactor.

It is found in the cytoplasm. The catalysed reaction is 4-imidazolone-5-propanoate = trans-urocanate + H2O. The protein operates within amino-acid degradation; L-histidine degradation into L-glutamate; N-formimidoyl-L-glutamate from L-histidine: step 2/3. Functionally, catalyzes the conversion of urocanate to 4-imidazolone-5-propionate. This is Urocanate hydratase from Brucella melitensis biotype 2 (strain ATCC 23457).